A 718-amino-acid chain; its full sequence is Heat shock 70 kDa protein 6, chloroplastic (718 aa).

The transit peptide at 1-92 (MASSAAQIHV…IDLGTTNSAV (92 aa)) directs the protein to the chloroplast. The disordered stretch occupies residues 671-718 (QSLYNQPGAGGPGAGPSPGGEGASSGDSSSSKGGDGDDVIDADFTDSQ). Residues 678 to 693 (GAGGPGAGPSPGGEGA) show a composition bias toward gly residues. The span at 706 to 718 (GDDVIDADFTDSQ) shows a compositional bias: acidic residues.

This sequence belongs to the heat shock protein 70 (TC 1.A.33) family. DnaK subfamily. As to quaternary structure, interacts with geminivirus movement protein (MP).

Its subcellular location is the plastid. The protein localises to the chloroplast stroma. Its function is as follows. Acts redundantly with HSP70-7 in the thermotolerance of germinating seeds. Plays an important role in the protein precursor import into chloroplasts. In cooperation with other chaperones, Hsp70s are key components that facilitate folding of de novo synthesized proteins, assist translocation of precursor proteins into organelles, and are responsible for degradation of damaged protein under stress conditions. This Arabidopsis thaliana (Mouse-ear cress) protein is Heat shock 70 kDa protein 6, chloroplastic (HSP70-6).